We begin with the raw amino-acid sequence, 432 residues long: 3-phosphoshikimate 1-carboxyvinyltransferase (432 aa).

Positions 25, 26, and 30 each coordinate 3-phosphoshikimate. Position 25 (lysine 25) interacts with phosphoenolpyruvate. Phosphoenolpyruvate contacts are provided by glycine 97 and arginine 125. Residues serine 170, glutamine 172, aspartate 318, and lysine 345 each coordinate 3-phosphoshikimate. Glutamine 172 serves as a coordination point for phosphoenolpyruvate. Aspartate 318 (proton acceptor) is an active-site residue. Phosphoenolpyruvate contacts are provided by arginine 349 and arginine 393.

It belongs to the EPSP synthase family. As to quaternary structure, monomer.

The protein resides in the cytoplasm. The catalysed reaction is 3-phosphoshikimate + phosphoenolpyruvate = 5-O-(1-carboxyvinyl)-3-phosphoshikimate + phosphate. It functions in the pathway metabolic intermediate biosynthesis; chorismate biosynthesis; chorismate from D-erythrose 4-phosphate and phosphoenolpyruvate: step 6/7. Catalyzes the transfer of the enolpyruvyl moiety of phosphoenolpyruvate (PEP) to the 5-hydroxyl of shikimate-3-phosphate (S3P) to produce enolpyruvyl shikimate-3-phosphate and inorganic phosphate. In Geobacillus thermodenitrificans (strain NG80-2), this protein is 3-phosphoshikimate 1-carboxyvinyltransferase.